The primary structure comprises 345 residues: Mariner Mos1 transposase (345 aa).

The DNA-binding stretch occupies residues 1-112 (MSSFVPNKEQ…VSNRLREMGK (112 aa)). 2 DNA-binding regions (H-T-H motif) span residues 24 to 55 (TAAESHRMLVEAFGEQVPTVKKCERWFQRFKS) and 89 to 110 (QKQLAEQLEVSQQAVSNRLREM). The tract at residues 113–125 (IQKVGRWVPHELN) is linker. The tract at residues 126–345 (ERQMERRKNT…CVASDGKYLE (220 aa)) is catalytic. Mg(2+) is bound by residues D156, D249, and D284.

As to quaternary structure, homodimer. The complex has a trans arrangement, with each transposon end recognized by the DNA binding region of one transposase monomer and by the active site of the other monomer. Mg(2+) is required as a cofactor. It depends on Mn(2+) as a cofactor.

It localises to the nucleus. Mediates transposition of transposon Mos1 by a 'cut and paste' mechanism. Transposases are sequence-specific nucleases and strand transferases that catalyze transposition through an ordered series of events: sequence-specific binding of transposase to the terminal inverted repeats (IR) present at each end of the transposon, pairing of the transposon IRs in a paired-end complex (PEC), cleavage of one or both DNA strands at each transposon end, capture of target DNA, and strand transfer to insert the transposon at a new site. The polypeptide is Mariner Mos1 transposase (mariner\T) (Drosophila mauritiana (Fruit fly)).